A 1314-amino-acid polypeptide reads, in one-letter code: Tetratricopeptide repeat protein 21A (1314 aa).

TPR repeat units lie at residues Ser-110–Ser-143, Leu-214–Asn-247, Ala-326–Arg-359, Met-494–Phe-527, Asp-529–Val-561, Pro-565–Lys-598, Ala-616–Thr-649, Pro-721–Asp-754, Ala-755–Asp-788, Leu-790–Val-821, Val-831–Ile-863, Ala-883–Asp-916, Lys-918–His-950, Glu-951–Asn-984, Leu-986–Val-1018, Pro-1022–Gly-1055, Glu-1195–Cys-1228, Arg-1230–Ala-1262, and Pro-1264–Tyr-1297.

Belongs to the TTC21 family. As to quaternary structure, interacts with IFT20. Interacts with IFT52. Interacts with IFT140. Interacts with CEP78; regulating IFT20 stability and localization.

Functionally, intraflagellar transport (IFT)-associated protein required for spermatogenesis. Required for sperm flagellar formation and intraflagellar transport. The protein is Tetratricopeptide repeat protein 21A (Ttc21a) of Mus musculus (Mouse).